Here is an 832-residue protein sequence, read N- to C-terminus: Cation/H(+) antiporter 21 (832 aa).

12 consecutive transmembrane segments (helical) span residues 33-55 (ISAA…RILY), 61-81 (LCLP…PTVL), 99-119 (LLET…GLGL), 132-152 (VIIA…LYYL), 161-181 (ILAG…PDLA), 200-220 (CAAV…MAIF), 236-256 (STIA…AWIF), 278-298 (IICS…AFLF), 319-339 (FLSG…ADIG), 352-372 (VVTS…SIFL), 379-399 (GLAI…ILNA), and 413-433 (HLTL…AIAY). Over residues 792–802 (RQTAENNNQEP) the composition is skewed to polar residues. Positions 792–832 (RQTAENNNQEPVQGKAKTDHEATPFMEDEDDEVEHQYSMRR) are disordered.

Belongs to the monovalent cation:proton antiporter 2 (CPA2) transporter (TC 2.A.37) family. CHX (TC 2.A.37.4) subfamily. Specifically expressed in root endodermal cells. Expressed in seedlings, roots, leaves, flowers, flower buds and pollen.

It is found in the cell membrane. Operates as a Na(+)/H(+) antiporter that plays a role in regulation of xylem Na(+) concentration and, consequently, Na(+) accumulation in the leaf. Required for pollen tube guidance, but not for normal pollen development. May also be involved in the development or function of the female gametophyte. The protein is Cation/H(+) antiporter 21 (CHX21) of Arabidopsis thaliana (Mouse-ear cress).